A 269-amino-acid polypeptide reads, in one-letter code: Interleukin-1 beta (269 aa).

A propeptide spanning residues 1 to 112 is cleaved from the precursor; the sequence is MAMVPEITCD…EEPITFKNCD (112 aa).

It belongs to the IL-1 family. In terms of assembly, monomer. In its precursor form, weakly interacts with full-length MEFV; the mature cytokine does not interact at all. Interacts with integrins ITGAV:ITGBV and ITGA5:ITGB1; integrin-binding is required for IL1B signaling. Interacts with cargo receptor TMED10; the interaction is direct and is required for the secretion of IL1B mature form. Interacts with HSP90AB1; the interaction facilitates cargo translocation into the ERGIC. Interacts with HSP90B1; the interaction facilitates cargo translocation into the ERGIC.

It is found in the cytoplasm. Its subcellular location is the cytosol. The protein resides in the secreted. The protein localises to the lysosome. It localises to the extracellular exosome. Functionally, potent pro-inflammatory cytokine. Initially discovered as the major endogenous pyrogen, induces prostaglandin synthesis, neutrophil influx and activation, T-cell activation and cytokine production, B-cell activation and antibody production, and fibroblast proliferation and collagen production. Promotes Th17 differentiation of T-cells. Synergizes with IL12/interleukin-12 to induce IFNG synthesis from T-helper 1 (Th1) cells. Plays a role in angiogenesis by inducing VEGF production synergistically with TNF and IL6. Involved in transduction of inflammation downstream of pyroptosis: its mature form is specifically released in the extracellular milieu by passing through the gasdermin-D (GSDMD) pore. This chain is Interleukin-1 beta (IL1B), found in Trichosurus vulpecula (Brush-tailed possum).